Consider the following 118-residue polypeptide: Putative pterin-4-alpha-carbinolamine dehydratase (118 aa).

Belongs to the pterin-4-alpha-carbinolamine dehydratase family.

The catalysed reaction is (4aS,6R)-4a-hydroxy-L-erythro-5,6,7,8-tetrahydrobiopterin = (6R)-L-erythro-6,7-dihydrobiopterin + H2O. The polypeptide is Putative pterin-4-alpha-carbinolamine dehydratase (Pseudomonas putida (strain ATCC 700007 / DSM 6899 / JCM 31910 / BCRC 17059 / LMG 24140 / F1)).